The primary structure comprises 207 residues: MFFVTPAYAEEAPAAATGTDAHAAPAAGEVHTETGVAEGEHARGPFPPFDSTTYASQLLWLVITFGVFYLLMQKVIAPRIGAILDQRHKRISQDLEEAGRLKAEADAAVQTYEGELAAARAKSHAIGSAARDAAKVKAEEDRRTVEASLSEKIKAAEARIADIKAKAFADVGTIAEETAAAVVEQLIGSTAAQADVAAAVAAAKKEV.

The helical transmembrane segment at 53–72 (TYASQLLWLVITFGVFYLLM) threads the bilayer.

Belongs to the ATPase B chain family. As to quaternary structure, F-type ATPases have 2 components, F(1) - the catalytic core - and F(0) - the membrane proton channel. F(1) has five subunits: alpha(3), beta(3), gamma(1), delta(1), epsilon(1). F(0) has three main subunits: a(1), b(2) and c(10-14). The alpha and beta chains form an alternating ring which encloses part of the gamma chain. F(1) is attached to F(0) by a central stalk formed by the gamma and epsilon chains, while a peripheral stalk is formed by the delta and b chains.

The protein resides in the cell inner membrane. In terms of biological role, f(1)F(0) ATP synthase produces ATP from ADP in the presence of a proton or sodium gradient. F-type ATPases consist of two structural domains, F(1) containing the extramembraneous catalytic core and F(0) containing the membrane proton channel, linked together by a central stalk and a peripheral stalk. During catalysis, ATP synthesis in the catalytic domain of F(1) is coupled via a rotary mechanism of the central stalk subunits to proton translocation. Its function is as follows. Component of the F(0) channel, it forms part of the peripheral stalk, linking F(1) to F(0). The b'-subunit is a diverged and duplicated form of b found in plants and photosynthetic bacteria. This Rhizobium etli (strain ATCC 51251 / DSM 11541 / JCM 21823 / NBRC 15573 / CFN 42) protein is ATP synthase subunit b 2 (atpF2).